The following is a 200-amino-acid chain: Putative biotin transporter BioYB (200 aa).

6 helical membrane-spanning segments follow: residues 13–33 (LIGM…VAPF), 36–56 (VAGI…LLLG), 61–81 (AIAM…FAQF), 90–110 (GKSG…GWFL), 121–141 (FLIA…TYMY), and 158–178 (WGFM…LSFI).

It belongs to the BioY family.

It is found in the cell membrane. In terms of biological role, putative biotin transporter. In Bacillus subtilis (strain 168), this protein is Putative biotin transporter BioYB (bioYB).